The sequence spans 199 residues: MRAVCVFVLACVAVSGAPGVRGQDGPAEEELFQRAEDLLLRSILTQMEEQNSENDQPEWMEKRQHPGKRQHPGKREEDLEPEVEMERWRRQHPGKRAPLDLGMLEDPTALSELSKRQHPGKRYLMLLHKRQHPGRRELQEADGDSAELEKRQHPGKRRCEGWADAGCGLLELLDTSGAPEKRQHPGRRAELEDELPGLE.

The first 22 residues, 1 to 22 (MRAVCVFVLACVAVSGAPGVRG), serve as a signal peptide directing secretion. The disordered stretch occupies residues 48 to 90 (EEQNSENDQPEWMEKRQHPGKRQHPGKREEDLEPEVEMERWRR). Pyrrolidone carboxylic acid is present on Gln64. Residue Pro66 is modified to Proline amide. Gln70 is subject to Pyrrolidone carboxylic acid. Pro72 carries the post-translational modification Proline amide. Residue Gln91 is modified to Pyrrolidone carboxylic acid. Pro93 carries the post-translational modification Proline amide. Residue Gln117 is modified to Pyrrolidone carboxylic acid. Position 119 is a proline amide (Pro119). Disordered regions lie at residues 129-160 (KRQH…RRCE) and 175-199 (TSGA…PGLE). Position 131 is a pyrrolidone carboxylic acid (Gln131). Pro133 carries the post-translational modification Proline amide. Basic and acidic residues-rich tracts occupy residues 147–160 (ELEK…RRCE) and 179–190 (PEKRQHPGRRAE). Gln152 is subject to Pyrrolidone carboxylic acid. Pro154 bears the Proline amide mark. The residue at position 183 (Gln183) is a Pyrrolidone carboxylic acid. Proline amide is present on Pro185.

This sequence belongs to the TRH family.

It localises to the secreted. Functionally, functions as a regulator of the biosynthesis of TSH in the anterior pituitary gland and as a neurotransmitter/ neuromodulator in the central and peripheral nervous systems. The protein is Pro-thyrotropin-releasing hormone (trh) of Danio rerio (Zebrafish).